The sequence spans 61 residues: Double gene block protein 1 (61 aa).

The interval 1–45 (MDIESEVPVVGKQMLAGNRGKQKTRRSVAKDAIRKPASDSTNGGN) is disordered. The tract at residues 17–35 (GNRGKQKTRRSVAKDAIRK) is RNA-binding. Residues 28–37 (VAKDAIRKPA) show a composition bias toward basic and acidic residues.

Belongs to the carmovirus double gene block protein 1 family. Homodimer.

Cell-to-cell movement. Displays RNA-binding activity. In Carnation mottle virus (CarMV), this protein is Double gene block protein 1.